Consider the following 378-residue polypeptide: Queuine tRNA-ribosyltransferase (378 aa).

The Proton acceptor role is filled by aspartate 89. Substrate is bound by residues 89 to 93 (DSGGF), aspartate 143, glutamine 194, and glycine 221. An RNA binding region spans residues 252–258 (GVGTPAN). Aspartate 271 acts as the Nucleophile in catalysis. The tract at residues 276 to 280 (ARNGR) is RNA binding; important for wobble base 34 recognition. 4 residues coordinate Zn(2+): cysteine 309, cysteine 311, cysteine 314, and histidine 340.

The protein belongs to the queuine tRNA-ribosyltransferase family. As to quaternary structure, homodimer. Within each dimer, one monomer is responsible for RNA recognition and catalysis, while the other monomer binds to the replacement base PreQ1. Requires Zn(2+) as cofactor.

The enzyme catalyses 7-aminomethyl-7-carbaguanine + guanosine(34) in tRNA = 7-aminomethyl-7-carbaguanosine(34) in tRNA + guanine. It functions in the pathway tRNA modification; tRNA-queuosine biosynthesis. In terms of biological role, catalyzes the base-exchange of a guanine (G) residue with the queuine precursor 7-aminomethyl-7-deazaguanine (PreQ1) at position 34 (anticodon wobble position) in tRNAs with GU(N) anticodons (tRNA-Asp, -Asn, -His and -Tyr). Catalysis occurs through a double-displacement mechanism. The nucleophile active site attacks the C1' of nucleotide 34 to detach the guanine base from the RNA, forming a covalent enzyme-RNA intermediate. The proton acceptor active site deprotonates the incoming PreQ1, allowing a nucleophilic attack on the C1' of the ribose to form the product. After dissociation, two additional enzymatic reactions on the tRNA convert PreQ1 to queuine (Q), resulting in the hypermodified nucleoside queuosine (7-(((4,5-cis-dihydroxy-2-cyclopenten-1-yl)amino)methyl)-7-deazaguanosine). This chain is Queuine tRNA-ribosyltransferase, found in Lachnoclostridium phytofermentans (strain ATCC 700394 / DSM 18823 / ISDg) (Clostridium phytofermentans).